We begin with the raw amino-acid sequence, 767 residues long: DNA topoisomerase 1 (767 aa).

A compositionally biased stretch (basic and acidic residues) spans 1–23 (MSGDHLHNDSQIEADFRLNDSHK). Residues 1–200 (MSGDHLHNDS…DNKKKKAKKE (200 aa)) form a disordered region. N-acetylserine is present on Ser-2. 2 positions are modified to phosphoserine: Ser-2 and Ser-10. Over residues 24-39 (HKDKHKDREHRHKEHK) the composition is skewed to basic residues. Basic and acidic residues predominate over residues 40–110 (KDKDKDREKS…DAKIKKEKEN (71 aa)). Phosphoserine is present on Ser-59. Lys-103 participates in a covalent cross-link: Glycyl lysine isopeptide (Lys-Gly) (interchain with G-Cter in SUMO2). Residue Lys-105 forms a Glycyl lysine isopeptide (Lys-Gly) (interchain with G-Cter in SUMO); alternate linkage. A Glycyl lysine isopeptide (Lys-Gly) (interchain with G-Cter in SUMO2); alternate cross-link involves residue Lys-105. Ser-114 carries the post-translational modification Phosphoserine. Lys-119 is covalently cross-linked (Glycyl lysine isopeptide (Lys-Gly) (interchain with G-Cter in SUMO); alternate). Lys-119 is covalently cross-linked (Glycyl lysine isopeptide (Lys-Gly) (interchain with G-Cter in SUMO2); alternate). A Glycyl lysine isopeptide (Lys-Gly) (interchain with G-Cter in SUMO1); alternate cross-link involves residue Lys-119. Over residues 131–168 (PKEDIKPLKRPRDEDDADYKPKKIKTEDIKKEKKRKLE) the composition is skewed to basic and acidic residues. Residues Lys-136 and Lys-150 each participate in a glycyl lysine isopeptide (Lys-Gly) (interchain with G-Cter in SUMO2) cross-link. Lys-155 participates in a covalent cross-link: Glycyl lysine isopeptide (Lys-Gly) (interchain with G-Cter in SUMO); alternate. Lys-155 participates in a covalent cross-link: Glycyl lysine isopeptide (Lys-Gly) (interchain with G-Cter in SUMO2); alternate. Glycyl lysine isopeptide (Lys-Gly) (interchain with G-Cter in SUMO2) cross-links involve residues Lys-160 and Lys-166. A Glycyl lysine isopeptide (Lys-Gly) (interchain with G-Cter in SUMO2); alternate cross-link involves residue Lys-174. Lys-174 is subject to N6-acetyllysine; alternate. The segment covering 181-200 (KDKDKKVAEPDNKKKKAKKE) has biased composition (basic and acidic residues). A Glycyl lysine isopeptide (Lys-Gly) (interchain with G-Cter in SUMO2) cross-link involves residue Lys-206. Residue Lys-282 is modified to N6-acetyllysine. A Glycyl lysine isopeptide (Lys-Gly) (interchain with G-Cter in SUMO2) cross-link involves residue Lys-338. 2 interaction with DNA regions span residues 427–428 (KY) and 490–495 (RAGNEK). Positions 434–767 (SSRIKGEKDW…IDMTDEDYEF (334 aa)) constitute a Topo IB-type catalytic domain. Ser-508 carries the phosphoserine; by CK2 modification. Lys-551 is covalently cross-linked (Glycyl lysine isopeptide (Lys-Gly) (interchain with G-Cter in SUMO2)). The interval 587–589 (TAK) is interaction with DNA. Glycyl lysine isopeptide (Lys-Gly) (interchain with G-Cter in SUMO2) cross-links involve residues Lys-644, Lys-702, and Lys-714. The O-(3'-phospho-DNA)-tyrosine intermediate role is filled by Tyr-725.

It belongs to the type IB topoisomerase family. In terms of assembly, monomer. Interacts with ERCC6. Interacts with TPRN; TPRN interacts with a number of DNA damage response proteins, is recruited to sites of DNA damage and may play a role in DNA damage repair. Post-translationally, sumoylated. Lys-119 is the main site of sumoylation. Sumoylation plays a role in partitioning TOP1 between nucleoli and nucleoplasm. Levels are dramatically increased on camptothecin (CPT) treatment. In terms of processing, phosphorylation at Ser-508 by CK2 increases binding to supercoiled DNA and sensitivity to camptothecin.

The protein resides in the nucleus. Its subcellular location is the nucleolus. It localises to the nucleoplasm. It catalyses the reaction ATP-independent breakage of single-stranded DNA, followed by passage and rejoining.. Functionally, releases the supercoiling and torsional tension of DNA introduced during the DNA replication and transcription by transiently cleaving and rejoining one strand of the DNA duplex. Introduces a single-strand break via transesterification at a target site in duplex DNA. The scissile phosphodiester is attacked by the catalytic tyrosine of the enzyme, resulting in the formation of a DNA-(3'-phosphotyrosyl)-enzyme intermediate and the expulsion of a 5'-OH DNA strand. The free DNA strand then rotates around the intact phosphodiester bond on the opposing strand, thus removing DNA supercoils. Finally, in the religation step, the DNA 5'-OH attacks the covalent intermediate to expel the active-site tyrosine and restore the DNA phosphodiester backbone. Regulates the alternative splicing of tissue factor (F3) pre-mRNA in endothelial cells. Involved in the circadian transcription of the core circadian clock component BMAL1 by altering the chromatin structure around the ROR response elements (ROREs) on the BMAL1 promoter. The chain is DNA topoisomerase 1 (Top1) from Rattus norvegicus (Rat).